The sequence spans 424 residues: Tryptophan synthase beta chain (424 aa).

The residue at position 108 (lysine 108) is an N6-(pyridoxal phosphate)lysine.

Belongs to the TrpB family. In terms of assembly, tetramer of two alpha and two beta chains. Pyridoxal 5'-phosphate serves as cofactor.

It carries out the reaction (1S,2R)-1-C-(indol-3-yl)glycerol 3-phosphate + L-serine = D-glyceraldehyde 3-phosphate + L-tryptophan + H2O. It functions in the pathway amino-acid biosynthesis; L-tryptophan biosynthesis; L-tryptophan from chorismate: step 5/5. Its function is as follows. The beta subunit is responsible for the synthesis of L-tryptophan from indole and L-serine. This is Tryptophan synthase beta chain (trpB) from Thermoplasma acidophilum (strain ATCC 25905 / DSM 1728 / JCM 9062 / NBRC 15155 / AMRC-C165).